A 3763-amino-acid chain; its full sequence is MKGSIFLLFIFQIFKFSSSYSHYPHKNQFSFYSPTSLSFTSSNFSSGSGSGSGGASGSGGGGNIGNKYNNENNKINEEIIISCIYDDYLNFQYQDLSKINGILINGFNKNSTSDIFVKNVNSQYYDQSDSSNNFHYFDQENNNLSPQSQLNKECPFNLKNPIPTFSNSRYSIKIDKSFDVSDEITLVSKNNFLNSNSISKLKFKVYIPNKITNKIKIQLINSLTGNNGPKIPLLNTIENNYLKPFPCHQWLDAFILFNETNYYNNNNNNNYPIFYNGLKITSSNRSLDNTWIDEVYIDEIKLISNNNKHNSNKNDRKRNIDQTNEIYDKININNNNYNIRKLFSILDDNNNNNNNNNNNNNNNNNNEIINSYNTINSRADIALGGNSDDQSDISYSIICNKHMNELNNEIKWRFEEGSSSSLVETANGNLILEGSIHSISKHQADYNFNCKTNWKIRIEFSPIIDDYQYNGRMELASFAYTKNGGPIDTLYWKYYKFVNGYLSGLDCNQGKLIQINNNNNHNENNNGILQIGIGANNKNGRFGLSVYGLQLSIDNDNTFNINVDLNNQNNHLSNNNNKNNNNNNNNEVLECNCPIGFICLNDGTCKLNFQNDVDEEYIDCSTLQCPSGYECKLDKNSKTRGCIEQIGPQNLNQTNKCLGNLKCPDGFGCWHNSTDNTLNCKQYNNHKFDTNVIDSEKHRHHCRNVDCPKSHYCKIQRNGLPRCFPKVNPCEFVSCDCNLECRVTSCGDAKCFAPEECCEGKACMDTRNYRCVKINGVDECVRIPPLKPLPPPPIFYETPSPTSAPPTETPSPTDTPTDKPTIPPTPTPTPSKEITDCSQVICQVNYTCFDIQKGVGPFTPVCIPINYCDEYTTRFDLQGYVWLDDNENGYRDVNENGVETEPIGVEGIFCNLVFSTDHSPARNHYGDIIPVSVTNLDGFFSFNDVVPGSYVIDFYNIKGYHWTLPFNRYFKNSNWVNSDGTSLPFELPQYNVSNPNFIISPQSNLISKSITLPQPIFSTNAIVTVNNDGFDELGSSGSGSSGNSGSSGSGGSSNDSTESQWSSESESSASLITPSNICQTHFTVSNILAGLIVGPQPTPSTDIPTTTTTTTSTSTTGPIEPTSTPTPIVDVIDYYGIGKQVFIDFNNNGIFDSGIDRPVSGVEITLIQKGFRAYNHKGDKVPTIKTDTNGFYFFDALAPGVYRVSLNNLPPHGYTNSLLNKYPIDTSSNTSAQFIVYYRVKDNIKYNASDYPLASSNIKPKLAQYINSYVDFALVPINPPIAVGDTVYFDSNQNGKQDPFEKGIKGIQVTLKDLKNGYEYKTITDDNGKYLFDQMIESDNYQLQFSVPNGFQVVDHPNSIKNGVYTMDTFQLSSSTTPPTNASLTKGVVGNKKVNSAYFDDSKDVPLYFENSYAIGHQAFIDTNLDGLYKNDLDKPLPGVEVTLVNAASPSTPITNILGQIVRTVITDAKGFYQFDFLKPNNYIVQFKPPTGFKVTKPPPNTATYPELGSLIDTKSFKTPSLDIVTLSKPKNIEYIRLNVQASNIFESVNAGFYIPPTFSIGHRVWYDTNADGIMDPTEEGVPGIVVSLYTDKSEPAYDINDNLIIPTITDSKGFYLLTKIPTGNYFISFSNLPKGYTWTKQNVLTLDSVGYDSRPNVFTGYTSLFEMSTTSQLVRTTVPSDNSPDFYINPIENAGIIKGNRGLVIKYAVGRYIFYDDNRNGILDDYENGVGGVIVQIFTSAGKPALDFNGKVIPPAVTDSTGRYIIDNLSQGDYIIQFSNIPNGYNFENLPPPYPNYLNGRIGTFTLSPSSSINTTNVIKKFNPPKPNGGKKVSFSHSINQKSRKLLNDGIIGQDTSVDLSNVIAGGSTVDGVDIPNVIAGGSTVDGGTSVNGGTGSTSTTTVSSSPSSSSDIGSSSDISSEVSSSLSSSPSSSEQPSEQSSSSSEQPPEDSMEEYPVHYYEPVFETTPGSYPLDSIKAERTDLTRNAAIVRAAPYAFGQKVFFIDNNGNEVGVPDVTVTLVNSNGFPVTSINGVNMVPTKTDSKGSYRFNLLRAGSYHVEFSNIPIGFSFFDPLSGKIDFNLVNTDPNVRGAIPADKVPKATYYDQHVNLQLNPPFIFAIGTRVWNDTNKNGLYEIAEPVFPNITVRLFDQNLQPVLDNFNIQVEPTVTNALGQYYFDNLHSGSYIVKFEVPTRYYFAPQLKSIENSNGVGVNSKPNSQGYTSVISLSPDSLVEAPPSDFNFTIRSLVGNFHIDAGLIYDENYVKSYAVGRYVFYDLNDNGIMDSGEMGVPNVTVEIFNPTGQQVYNINELLIGSTTTDSNGYYLFDEIQPGSYIIKFSNIPNDLMFGNKTKPNSNTGLTEPFLLFPKEPAIRLVNSTTDVGVKAQAVDFTENAGLIKKVTFAIGHYVWYDINSNGLQDYPNEPPAYGVPLRLLKCNLIGITYDTCFTVINTTTTDQNGLYYFDNLSPGLYKLLFMNQQGIFETTTPFAGNGTNDSKAIDEAITGIRLSIYTKNVTKTDSNLDPMIKAPFIDRTLNVGILKPPMFSIGHKVWYDTNKNGKIDLKEQPAPNVTIYLKRAKEVNFEYSFDLYGKPMIAKTNETGDYWINNIPPGLYIAKFFPPNDTRFTIQMNDNSANVFGSSYAIYLFYKVPGIHPYNLKVDIGAVNASYVYSKVNAGLLKGLVDIRLYAVSGYVYNDTNSNGIRDPGENGVNGTIVTLLDINGNTMVDADSYPINSYTTGPDGYYKFDDFSFGKYIITFSGVPDLIYQFYKPDDQQHLNHSTLSNITIWSPDNPMVVNATLSDHVNAQYILREQNKGIIRVITYAIGGKVIPDFKNTTYKDSGYAGGAVIVQLYRNNSIATDLRGNPIPSVLTNVLTGEYLFDNVPILEGYQVMFSSPPPGWIFEKYRITQTPFIQLDLLPSFNLPKSNPKLIDKKLYPNIFATYGVLDQDTIISPTLFGIGKNTFIDVENSGLESIPLIPLGGVVVTLYNSVFERVFDAFGNLVKEKTTGEDGEYSFEDLYSGQYIVHFGLVEGYSFTQQYAGTDPEIDSNASPVDGYSEIIQLDSMNNELILIPLESRNNTLFCDPTIDGGYVSLSPQGFISGMTYIDYNADGVFTPNSRDKPYPNITVSIYTGDDSRLVATAQTDKKGFYSFSHLFISTQYQVVFSGIPQGYYTSFQADTVQFPIATKTGVNLGIIKPLEYCQDDIKIITTCFVRGDSNDDLPAVVQFPYTAYSDLNGDNGQKVDLVTMSETKTVYGLGYDRKENTIYLSPYKKQFSSLNSKTSSTIFKKSLSTGALSAYVNLATVLGFDFLAPNGKVYGDSQTYRVLFGDLDIIGDYIWVTNLYRNIVVKIPLRQTPTRENIKLVNITHNCGPDPFRIFGLGYNGSNVFVGGVCEGSVSKDIRNVIGVIKVISSDETSFSDVLTIPMNYPRGRLQTRIMFLNDMTPIFSSVQNSTWQVWNDTVGSFKPQPQITDITFIGDGGNMVISMKDREADSQSVTPAGDILMACKDSNGVYQLESAGVCGGLIGTNPISIGTMIEQGPGGGEFFDDNFSDRDWQHDETTWGSSYYLPGSGEVIGGAYDLLSTNEAIVKHWSVYNGRVLYGFILIHGAGLDYVFNKVNGLGDMDANCRLPNTYIGNYVWYDLNKNGLQDPNEKGMANITVQLFSAANSTFINSTLTDSSGNYNFQVISEFKYRVHFVAPKGFTYSPIVTVSSDPNDKRDLEKINSLPDSKGDAYFFANGNGENTQDIDCGFIRI.

Positions Met-1–Ser-19 are cleaved as a signal peptide. Residues Asn-43, Asn-110, Asn-258, and Asn-284 are each glycosylated (N-linked (GlcNAc...) asparagine). The Follistatin-like 1 domain occupies Asp-619 to Ile-643. N-linked (GlcNAc...) asparagine glycans are attached at residues Asn-652 and Asn-672. 2 Follistatin-like domains span residues His-701–Phe-724 and Pro-729–Phe-752. The tract at residues Pro-792–Lys-832 is disordered. The span at Pro-810 to Pro-820 shows a compositional bias: low complexity. 2 N-linked (GlcNAc...) asparagine glycosylation sites follow: Asn-845 and Asn-991. Disordered stretches follow at residues Leu-1033–Ser-1068 and Pro-1095–Thr-1124. Residues Ser-1036–Gly-1051 are compositionally biased toward gly residues. Composition is skewed to low complexity over residues Ser-1052–Ser-1068 and Pro-1099–Thr-1124. An N-linked (GlcNAc...) asparagine glycan is attached at Asn-1054. The 69-residue stretch at Val-1159–Ser-1227 folds into the CNA-B 1 domain. 2 N-linked (GlcNAc...) asparagine glycosylation sites follow: Asn-1229 and Asn-1247. Residues Ile-1304–Ser-1373 enclose the CNA-B 2 domain. The N-linked (GlcNAc...) asparagine glycan is linked to Asn-1381. CNA-B domains follow at residues Leu-1437–Lys-1515, Val-1582–Asp-1648, and Val-1731–Ser-1809. Residues Asn-1769 and Asn-1815 are each glycosylated (N-linked (GlcNAc...) asparagine). The disordered stretch occupies residues Gly-1883 to Glu-1955. A compositionally biased stretch (low complexity) spans Ser-1898 to Gln-1948. Residues Val-2015–Asn-2083 enclose the CNA-B 6 domain. Residues Asn-2128, Asn-2145, Asn-2243, Asn-2294, Asn-2351, Asn-2378, Asn-2453, Asn-2493, Asn-2496, Asn-2516, Asn-2572, Asn-2601, Asn-2624, Asn-2668, Asn-2698, Asn-2714, Asn-2781, Asn-2787, Asn-2800, Asn-2838, and Asn-2858 are each glycosylated (N-linked (GlcNAc...) asparagine). The CNA-B 7 domain occupies Phe-2143–Tyr-2197. In terms of domain architecture, CNA-B 8 spans Val-2292–Asn-2345. The 25-residue stretch at Asn-2453 to Phe-2477 folds into the CNA-B 9 domain. The CNA-B 10 domain maps to Val-2713 to Asp-2766. The 78-residue stretch at Leu-2984 to Tyr-3061 folds into the CNA-B 11 domain. Residues Asn-3083, Asn-3130, Asn-3372, Asn-3390, Asn-3459, Asn-3466, Asn-3557, Asn-3666, Asn-3676, and Asn-3681 are each glycosylated (N-linked (GlcNAc...) asparagine). Positions Tyr-3128 to Ile-3201 constitute a CNA-B 12 domain. The CNA-B 13 domain occupies Met-3664–Asn-3733.

It belongs to the serine-aspartate repeat-containing protein (SDr) family.

The protein resides in the secreted. This is Colossin-B (colB) from Dictyostelium discoideum (Social amoeba).